We begin with the raw amino-acid sequence, 251 residues long: Triosephosphate isomerase (251 aa).

9-11 contacts substrate; that stretch reads NWK. Histidine 96 functions as the Electrophile in the catalytic mechanism. Glutamate 167 (proton acceptor) is an active-site residue. Substrate-binding positions include glycine 173, serine 213, and 234–235; that span reads GG.

It belongs to the triosephosphate isomerase family. In terms of assembly, homodimer.

It localises to the cytoplasm. The catalysed reaction is D-glyceraldehyde 3-phosphate = dihydroxyacetone phosphate. The protein operates within carbohydrate biosynthesis; gluconeogenesis. Its pathway is carbohydrate degradation; glycolysis; D-glyceraldehyde 3-phosphate from glycerone phosphate: step 1/1. In terms of biological role, involved in the gluconeogenesis. Catalyzes stereospecifically the conversion of dihydroxyacetone phosphate (DHAP) to D-glyceraldehyde-3-phosphate (G3P). The sequence is that of Triosephosphate isomerase from Bacteroides fragilis (strain ATCC 25285 / DSM 2151 / CCUG 4856 / JCM 11019 / LMG 10263 / NCTC 9343 / Onslow / VPI 2553 / EN-2).